The primary structure comprises 368 residues: tRNA-specific 2-thiouridylase MnmA (368 aa).

ATP is bound by residues 11–18 (GMSGGVDS) and methionine 37. The tract at residues 97 to 99 (NPD) is interaction with target base in tRNA. Catalysis depends on cysteine 102, which acts as the Nucleophile. A disulfide bridge connects residues cysteine 102 and cysteine 199. Glycine 127 is an ATP binding site. The tract at residues 149–151 (KDQ) is interaction with tRNA. The active-site Cysteine persulfide intermediate is the cysteine 199. The tract at residues 311-312 (RY) is interaction with tRNA.

The protein belongs to the MnmA/TRMU family. Interacts with TusE.

The protein resides in the cytoplasm. It catalyses the reaction S-sulfanyl-L-cysteinyl-[protein] + uridine(34) in tRNA + AH2 + ATP = 2-thiouridine(34) in tRNA + L-cysteinyl-[protein] + A + AMP + diphosphate + H(+). Its function is as follows. Catalyzes the 2-thiolation of uridine at the wobble position (U34) of tRNA(Lys), tRNA(Glu) and tRNA(Gln), leading to the formation of s(2)U34, the first step of tRNA-mnm(5)s(2)U34 synthesis. Sulfur is provided by IscS, via a sulfur-relay system. Binds ATP and its substrate tRNAs. The polypeptide is tRNA-specific 2-thiouridylase MnmA (Escherichia coli O6:H1 (strain CFT073 / ATCC 700928 / UPEC)).